The sequence spans 381 residues: MESIGIVAPQTMHFAEPLRLQSGSVIGNYQLVVETYGELNAARSNAVLVCHALNASHHVAGIYADDPRSTGWWDNMVGPGKPLDTNRFFVIGVNNLGSCFGSTGPMSDDPSTGQPYGARFPVVTVEDWVHAQARVADAFGIDRFAAVMGGSLGGMQALAWSLMYPDRVAHCIDIASTPKLSAQNIAFNEVARSAILSDPDFHGGNYYAHGVKPKRGLRVARMIGHITYLSDDDMAEKFGRALRRADGALDAYNFSFDVEFEVESYLRYQGDKFADYFDANTYLLITRALDYFDPAKAFDGNLTAALAHTQAKYLIASFSTDWRFAPARSREIVKALLDNKRTVSYAEIDAPHGHDAFLLDDARYHNLIRAYYERIANEVGA.

The AB hydrolase-1 domain maps to 45–360 (NAVLVCHALN…PHGHDAFLLD (316 aa)). Catalysis depends on serine 151, which acts as the Nucleophile. Arginine 221 contributes to the substrate binding site. Catalysis depends on residues aspartate 321 and histidine 354. A substrate-binding site is contributed by aspartate 355.

This sequence belongs to the AB hydrolase superfamily. MetX family. As to quaternary structure, homodimer.

It is found in the cytoplasm. The catalysed reaction is L-homoserine + succinyl-CoA = O-succinyl-L-homoserine + CoA. It functions in the pathway amino-acid biosynthesis; L-methionine biosynthesis via de novo pathway; O-succinyl-L-homoserine from L-homoserine: step 1/1. Functionally, transfers a succinyl group from succinyl-CoA to L-homoserine, forming succinyl-L-homoserine. The polypeptide is Homoserine O-succinyltransferase (Burkholderia vietnamiensis (strain G4 / LMG 22486) (Burkholderia cepacia (strain R1808))).